Here is a 478-residue protein sequence, read N- to C-terminus: Centromere DNA-binding protein complex CBF3 subunit C (478 aa).

Positions 206–251 are disordered; it reads EVGEEKDVDVSGANSDENSSPSSTIKNKKRSASKRSHSDNGNVGAT. Residues 217-230 are compositionally biased toward polar residues; the sequence is GANSDENSSPSSTI. Over residues 231 to 240 the composition is skewed to basic residues; sequence KNKKRSASKR.

Component of the CBF3 copmplex, which is formed of CBF3A/CBF2, CBF3B/CEP3, CBF3C/CTF13 and CBF3D. CBF3C interacts with CBF3D and SGT1.

Its subcellular location is the nucleus. The protein localises to the chromosome. The protein resides in the centromere. Its function is as follows. Acts as a central component of the centromere DNA-binding protein complex CBF3, which is essential for chromosome segregation and movement of centromeres along microtubules. CBF3 is required for the recruitment of other kinetochore complexes to CEN DNA. It plays a role in the attachment of chromosomes to the spindle and binds selectively to a highly conserved DNA sequence called CDEIII, found in centromers and in several promoters. The association of CBF3C with CBF3D and SGT1 is required for CBF3C activation and CBF3 assembly. This chain is Centromere DNA-binding protein complex CBF3 subunit C (CTF13), found in Saccharomyces cerevisiae (strain ATCC 204508 / S288c) (Baker's yeast).